The sequence spans 90 residues: Putative sodium channel toxin Ts35 (90 aa).

The N-terminal stretch at 1-22 (QDEVGLGSCSVIFVVGNEEGEA) is a signal peptide. Residues 23-87 (KDGYAVGGDR…WGNPTLGPCL (65 aa)) form the LCN-type CS-alpha/beta domain. 4 cysteine pairs are disulfide-bonded: cysteine 33/cysteine 86, cysteine 37/cysteine 61, cysteine 46/cysteine 66, and cysteine 50/cysteine 68.

It belongs to the long (4 C-C) scorpion toxin superfamily. Sodium channel inhibitor family. Expressed by the venom gland.

It localises to the secreted. Functionally, putative sodium channel toxin. This is Putative sodium channel toxin Ts35 from Tityus serrulatus (Brazilian scorpion).